A 71-amino-acid chain; its full sequence is Light-harvesting protein B-800/850 alpha chain (71 aa).

Topologically, residues M1–G15 are cytoplasmic. The chain crosses the membrane as a helical span at residues V16–A36. H31 provides a ligand contact to a bacteriochlorophyll. Over K37–K50 the chain is Periplasmic. The chain crosses the membrane as a helical span at residues A51–Q71.

This sequence belongs to the antenna complex alpha subunit family. An alpha/beta heterodimer conjugated to 3 bacteriochlorophyll molecules. The core complex is formed by different alpha and beta chains, binding bacteriochlorophyll molecules, and arranged most probably in tetrameric structures disposed around the reaction center. The non-pigmented gamma chains may constitute additional components.

It is found in the cell membrane. Functionally, antenna complexes are light-harvesting systems, which transfer the excitation energy to the reaction centers. The chain is Light-harvesting protein B-800/850 alpha chain (pucA) from Rubrivivax gelatinosus (Rhodocyclus gelatinosus).